Reading from the N-terminus, the 110-residue chain is Proline-rich protein 15-like protein A (110 aa).

Disordered regions lie at residues 29-51 and 65-110; these read IAGD…TDSQ and TKGR…KSGK. Basic residues predominate over residues 65–85; it reads TKGRHVKVSHSGRFKEKKRIR. Over residues 100-110 the composition is skewed to polar residues; that stretch reads TTANENNKSGK.

The protein belongs to the PRR15 family.

In Danio rerio (Zebrafish), this protein is Proline-rich protein 15-like protein A (prr15la).